The chain runs to 1690 residues: Trinucleotide repeat-containing gene 6C protein (1690 aa).

Polar residues-rich tracts occupy residues 1 to 12, 19 to 36, and 160 to 183; these read MATGSAQSSFPS, GSHG…NQSA, and AEPQ…NTDG. Disordered regions lie at residues 1–42, 158–202, 226–848, and 863–928; these read MATG…AGGT, ESAE…AMQT, PGAN…EPVV, and CKPA…TPGK. The segment at 1 to 921 is sufficient for interaction with argonaute family proteins; that stretch reads MATGSAQSSF…GNTSKKGLQK (921 aa). The segment covering 184-198 has biased composition (low complexity); that stretch reads PNNTNPMNSSPNPIN. The span at 255–288 shows a compositional bias: polar residues; that stretch reads NPATGSTNCGFSQGNGDTVNSALSAKQNGSSSAV. R313 is modified (omega-N-methylarginine). Residues 362 to 374 are compositionally biased toward polar residues; it reads GWDSASAASQTPA. Low complexity predominate over residues 384 to 404; sequence SWAKATSSGTTASEGSSDGSG. Positions 415–426 are enriched in basic and acidic residues; that stretch reads GTGEGRRRDKGV. Residues 444–459 show a composition bias toward polar residues; that stretch reads LSNSGWGQTPVKQNTA. Residues 464–474 are compositionally biased toward basic and acidic residues; sequence ESPRSERKNDN. S465 is subject to Phosphoserine. Composition is skewed to polar residues over residues 482 to 510, 519 to 530, 540 to 551, 644 to 656, and 663 to 678; these read IATQ…SGWV, ANTSWGDSNNKA, SISSTAVNNAAA, GTNA…TNWG, and PQQN…NVSN. Position 714 is a phosphoserine (S714). Positions 754-771 are enriched in low complexity; that stretch reads SSTTAPATPTTPTSSSTT. The residue at position 776 (T776) is a Phosphothreonine. The span at 778 to 788 shows a compositional bias: polar residues; the sequence is PSHQAGTQLNR. Residues 901–915 are compositionally biased toward low complexity; sequence SQESSSSCSSWGNTS. The region spanning 928–973 is the UBA domain; the sequence is KQDEAWIMSRLIKQLTDMGFPREPAEEALKSNSMNLDQAMSALLEK. S1006 carries the phosphoserine modification. Residues 1156–1214 are a coiled coil; the sequence is QLQLAYQRLQIQQQMLQAQRNVSGPMRQQEQQVARTITNLQQQIQQHQRQLAQALLVKQ. Disordered stretches follow at residues 1212 to 1337, 1351 to 1380, 1397 to 1421, 1441 to 1486, and 1600 to 1625; these read VKQP…PPGK, QNSE…ISNG, GLQN…PTIN, IKST…PSST, and PPTS…THGL. The span at 1214 to 1223 shows a compositional bias: pro residues; sequence QPPPPPPPPH. The tract at residues 1260–1690 is silencing domain; interaction with CNOT1 and PAN3; the sequence is NTFAPYPLAG…PGDLLSGESI (431 aa). A compositionally biased stretch (polar residues) spans 1272 to 1321; that stretch reads PNMNVNSIDMSSGLSVKDPSQSQSRLPQWTHPNSMGNLSSAASPLDQNPS. Residues 1371–1417 form a required for interaction with PABPC1 region; sequence KSDSDKISNGSSISWPPEFHPGVPWKGLQNIDPENDPDVTPGSVPTG. The tract at residues 1371-1690 is sufficient for translational repression when tethered to a target mRNA; it reads KSDSDKISNG…PGDLLSGESI (320 aa). The tract at residues 1381–1399 is PABPC1-interacting motif-2 (PAM2); sequence SSISWPPEFHPGVPWKGLQ. A compositionally biased stretch (polar residues) spans 1441-1457; sequence IKSTWSSGPASHTQASL. In terms of domain architecture, RRM spans 1565 to 1632; it reads AQKSLHMCVL…HGLVRSDTAH (68 aa). An interaction with the CCR4-NOT complex region spans residues 1596–1690; that stretch reads GQALPPTSSW…PGDLLSGESI (95 aa). Low complexity predominate over residues 1603-1613; sequence SSWQSSSGGSQ.

It belongs to the GW182 family. Interacts with one or more of the argonaute family proteins AGO1, AGO2, AGO3 and AGO4. Interacts with CNOT1; the interaction mediates the association with the CCR4-NOT complex. Interacts with PAN3; the interaction mediates the association with the PAN complex.

Its function is as follows. Plays a role in RNA-mediated gene silencing by micro-RNAs (miRNAs). Required for miRNA-dependent translational repression of complementary mRNAs by argonaute family proteins As scaffoldng protein associates with argonaute proteins bound to partially complementary mRNAs and simultaneously can recruit CCR4-NOT and PAN deadenylase complexes. This is Trinucleotide repeat-containing gene 6C protein (Tnrc6c) from Mus musculus (Mouse).